A 201-amino-acid chain; its full sequence is Large ribosomal subunit protein uL4 (201 aa).

The disordered stretch occupies residues 42 to 67; the sequence is GNSAQKTRSEVSGGGKKPWNQKGTGR.

It belongs to the universal ribosomal protein uL4 family. Part of the 50S ribosomal subunit.

One of the primary rRNA binding proteins, this protein initially binds near the 5'-end of the 23S rRNA. It is important during the early stages of 50S assembly. It makes multiple contacts with different domains of the 23S rRNA in the assembled 50S subunit and ribosome. Its function is as follows. Forms part of the polypeptide exit tunnel. This Legionella pneumophila (strain Paris) protein is Large ribosomal subunit protein uL4.